A 208-amino-acid polypeptide reads, in one-letter code: Ribosomal RNA large subunit methyltransferase E (208 aa).

Positions 63, 65, 83, 99, and 124 each coordinate S-adenosyl-L-methionine. Residue K164 is the Proton acceptor of the active site.

The protein belongs to the class I-like SAM-binding methyltransferase superfamily. RNA methyltransferase RlmE family.

Its subcellular location is the cytoplasm. The catalysed reaction is uridine(2552) in 23S rRNA + S-adenosyl-L-methionine = 2'-O-methyluridine(2552) in 23S rRNA + S-adenosyl-L-homocysteine + H(+). Its function is as follows. Specifically methylates the uridine in position 2552 of 23S rRNA at the 2'-O position of the ribose in the fully assembled 50S ribosomal subunit. This is Ribosomal RNA large subunit methyltransferase E from Salmonella paratyphi A (strain ATCC 9150 / SARB42).